Reading from the N-terminus, the 37-residue chain is Large ribosomal subunit protein bL36c (37 aa).

This sequence belongs to the bacterial ribosomal protein bL36 family.

The protein localises to the plastid. The protein resides in the chloroplast. The protein is Large ribosomal subunit protein bL36c of Vitis vinifera (Grape).